We begin with the raw amino-acid sequence, 203 residues long: Pyridoxal 5'-phosphate synthase subunit PdxT (203 aa).

51 to 53 lines the L-glutamine pocket; the sequence is GES. Catalysis depends on Cys-83, which acts as the Nucleophile. L-glutamine is bound by residues Arg-110 and 137 to 138; that span reads IR. Catalysis depends on charge relay system residues His-172 and Glu-174.

It belongs to the glutaminase PdxT/SNO family. In the presence of PdxS, forms a dodecamer of heterodimers. Only shows activity in the heterodimer.

The catalysed reaction is aldehydo-D-ribose 5-phosphate + D-glyceraldehyde 3-phosphate + L-glutamine = pyridoxal 5'-phosphate + L-glutamate + phosphate + 3 H2O + H(+). It catalyses the reaction L-glutamine + H2O = L-glutamate + NH4(+). It functions in the pathway cofactor biosynthesis; pyridoxal 5'-phosphate biosynthesis. Functionally, catalyzes the hydrolysis of glutamine to glutamate and ammonia as part of the biosynthesis of pyridoxal 5'-phosphate. The resulting ammonia molecule is channeled to the active site of PdxS. The protein is Pyridoxal 5'-phosphate synthase subunit PdxT of Thermoplasma acidophilum (strain ATCC 25905 / DSM 1728 / JCM 9062 / NBRC 15155 / AMRC-C165).